A 382-amino-acid chain; its full sequence is MVSTSIPEVKALRSSVSDYGNYDIIVRHYNYTGKLNIGAEKDHGIKLTSVVFILICCFIILENIFVLLTIWKTKKFHRPMYYFIGNLALSDLLAGVAYTANLLLSGATTYKLTPAQWFLREGSMFVALSASVFSLLAIAIERYITMLKMKLHNGSNSSRSFLLISACWVISLILGGLPIMGWNCISSLSSCSTVLPLYHKHYILFCTTVFTLLLLSIVILYCRIYSLVRTRSRRLTFRKNISKASRSSEKSLALLKTVIIVLSVFIACWAPLFILLLLDVGCKAKTCDILYKAEYFLVLAVLNSGTNPIIYTLTNKEMRRAFIRIVSCCKCPNGDSAGKFKRPIIPGMEFSRSKSDNSSHPQKDDGDNPETIMSSGNVNSSS.

N-acetylvaline is present on valine 2. Residues 2 to 46 (VSTSIPEVKALRSSVSDYGNYDIIVRHYNYTGKLNIGAEKDHGIK) lie on the Extracellular side of the membrane. Residue lysine 10 is modified to N6-acetyllysine. N-linked (GlcNAc...) asparagine glycosylation is present at asparagine 30. A helical transmembrane segment spans residues 47–68 (LTSVVFILICCFIILENIFVLL). Over 69-82 (TIWKTKKFHRPMYY) the chain is Cytoplasmic. Residues 83–104 (FIGNLALSDLLAGVAYTANLLL) traverse the membrane as a helical segment. Residues 105-116 (SGATTYKLTPAQ) are Extracellular-facing. The chain crosses the membrane as a helical span at residues 117–138 (WFLREGSMFVALSASVFSLLAI). Residue 120-121 (RE) coordinates sphing-4-enine 1-phosphate. Topologically, residues 139 to 160 (AIERYITMLKMKLHNGSNSSRS) are cytoplasmic. The helical transmembrane segment at 161–182 (FLLISACWVISLILGGLPIMGW) threads the bilayer. Residues 183-196 (NCISSLSSCSTVLP) are Extracellular-facing. The cysteines at positions 184 and 191 are disulfide-linked. Residues 197–224 (LYHKHYILFCTTVFTLLLLSIVILYCRI) form a helical membrane-spanning segment. The Cytoplasmic segment spans residues 225–257 (YSLVRTRSRRLTFRKNISKASRSSEKSLALLKT). Threonine 236 carries the phosphothreonine modification. The chain crosses the membrane as a helical span at residues 258–278 (VIIVLSVFIACWAPLFILLLL). Position 265-269 (265-269 (FIACW)) interacts with sphing-4-enine 1-phosphate. Over 279–289 (DVGCKAKTCDI) the chain is Extracellular. The cysteines at positions 282 and 287 are disulfide-linked. A helical membrane pass occupies residues 290–310 (LYKAEYFLVLAVLNSGTNPII). The Cytoplasmic portion of the chain corresponds to 311–382 (YTLTNKEMRR…MSSGNVNSSS (72 aa)). Cysteine 328 carries S-palmitoyl cysteine lipidation. The segment at 348 to 382 (MEFSRSKSDNSSHPQKDDGDNPETIMSSGNVNSSS) is disordered. Serine 351 and serine 353 each carry phosphoserine. Residues 351 to 366 (SRSKSDNSSHPQKDDG) are compositionally biased toward basic and acidic residues. The segment covering 371-382 (TIMSSGNVNSSS) has biased composition (polar residues).

It belongs to the G-protein coupled receptor 1 family. In terms of assembly, interacts with GNAI1 and GNAI3. Interacts with CD69; this interaction promotes S1PR1 degradation. Post-translationally, palmitoylated by ZDHHC5. Palmitoylation is required for targeting to plasma membrane, enabling G(i) coupling. Expressed in a wide variety of tissues with highest levels in brain, heart and spleen. Lower levels found in kidney, liver, lung, muscle, placenta, thymus, and uterus. Very low levels in intestine, stomach and testis. According to PubMed:9931453, expressed modestly in apparent endothelial cells surrounding some blood vessels (e.g. aortic trunk).

The protein localises to the cell membrane. It localises to the endosome. The protein resides in the membrane raft. In terms of biological role, G-protein coupled receptor for the bioactive lysosphingolipid sphingosine 1-phosphate (S1P) that seems to be coupled to the G(i) subclass of heteromeric G proteins. Signaling leads to the activation of RAC1, SRC, PTK2/FAK1 and MAP kinases. Plays an important role in cell migration, probably via its role in the reorganization of the actin cytoskeleton and the formation of lamellipodia in response to stimuli that increase the activity of the sphingosine kinase SPHK1. Required for normal chemotaxis toward sphingosine 1-phosphate. Required for normal embryonic heart development and normal cardiac morphogenesis. Plays an important role in the regulation of sprouting angiogenesis and vascular maturation. Inhibits sprouting angiogenesis to prevent excessive sprouting during blood vessel development. Required for normal egress of mature T-cells from the thymus into the blood stream and into peripheral lymphoid organs. Plays a role in the migration of osteoclast precursor cells, the regulation of bone mineralization and bone homeostasis. Plays a role in responses to oxidized 1-palmitoyl-2-arachidonoyl-sn-glycero-3-phosphocholine by pulmonary endothelial cells and in the protection against ventilator-induced lung injury. The polypeptide is Sphingosine 1-phosphate receptor 1 (Mus musculus (Mouse)).